A 495-amino-acid chain; its full sequence is Transmembrane protein 161A (495 aa).

An N-terminal signal peptide occupies residues 1–28; the sequence is MALMGVQLVVSLLAVSIMQRMAPHLSFA. Residues 29 to 99 are Extracellular-facing; it reads RWLLCNGSLL…VNVMDALVLR (71 aa). Residue asparagine 34 is glycosylated (N-linked (GlcNAc...) asparagine). Residues 100–120 traverse the membrane as a helical segment; sequence FFVEYQWLIDFAVYATGIYLF. At 121–135 the chain is on the cytoplasmic side; that stretch reads TEGYYSVVDASKEVN. The chain crosses the membrane as a helical span at residues 136 to 156; sequence IASIWCVLTVLFCLRTLYLLM. Residues 157–167 are Extracellular-facing; sequence SHYFLSEEGGE. The helical transmembrane segment at 168–188 threads the bilayer; that stretch reads RSVCLAFGFLSLLIAMLVLVV. At 189–227 the chain is on the cytoplasmic side; it reads REDYLEFGLEPGFTSLFDNFEVFARKQGYEWSVPFTKLS. Residues 228–248 traverse the membrane as a helical segment; the sequence is VKLGLAVICAFIGALLAFPGL. The Extracellular segment spans residues 249–265; that stretch reads RLAQTHLDAVQMNADRP. Residues 266–286 traverse the membrane as a helical segment; it reads MIQILLHMSFLSPLVIIVMWI. At 287–305 the chain is on the cytoplasmic side; it reads KPIARDFLGNAPMGKTSVT. A helical transmembrane segment spans residues 306–326; sequence LLSSSAFSSVRLWTIVVLCVL. The Extracellular portion of the chain corresponds to 327-367; that stretch reads RLLLTRYHLQAYLNLAQKWVEQMKKEAGRIAAIDIQRKVTR. The helical transmembrane segment at 368–388 threads the bilayer; it reads IFCYLTVVTLQYLIPILLVLF. Residues 389–465 are Cytoplasmic-facing; sequence STLALKSLGD…ALLTPIFFRG (77 aa). A helical membrane pass occupies residues 466–486; it reads IFAFLTWWVAACQLISSLFGI. The Extracellular portion of the chain corresponds to 487 to 495; that stretch reads YFHQYLMHN.

The protein belongs to the TMEM161 family.

It localises to the membrane. Its function is as follows. May play a role in protection against oxidative stress. The protein is Transmembrane protein 161A (tmem161a) of Danio rerio (Zebrafish).